The primary structure comprises 55 residues: Ribulose bisphosphate carboxylase large chain (55 aa).

Histidine 18 acts as the Proton acceptor in catalysis. Residues arginine 19 and histidine 27 each coordinate substrate.

This sequence belongs to the RuBisCO large chain family. Type I subfamily. Heterohexadecamer of 8 large chains and 8 small chains; disulfide-linked. The disulfide link is formed within the large subunit homodimers. Requires Mg(2+) as cofactor. Post-translationally, the disulfide bond which can form in the large chain dimeric partners within the hexadecamer appears to be associated with oxidative stress and protein turnover.

The protein localises to the plastid. It localises to the chloroplast. It catalyses the reaction 2 (2R)-3-phosphoglycerate + 2 H(+) = D-ribulose 1,5-bisphosphate + CO2 + H2O. The catalysed reaction is D-ribulose 1,5-bisphosphate + O2 = 2-phosphoglycolate + (2R)-3-phosphoglycerate + 2 H(+). Functionally, ruBisCO catalyzes two reactions: the carboxylation of D-ribulose 1,5-bisphosphate, the primary event in carbon dioxide fixation, as well as the oxidative fragmentation of the pentose substrate in the photorespiration process. Both reactions occur simultaneously and in competition at the same active site. The sequence is that of Ribulose bisphosphate carboxylase large chain from Vitis sp. (Grape).